The chain runs to 128 residues: S-protein homolog 5 (128 aa).

The signal sequence occupies residues 1-20 (MEKVSIVCFFFFLLFGSGYG).

This sequence belongs to the plant self-incompatibility (S1) protein family.

It localises to the secreted. The sequence is that of S-protein homolog 5 from Arabidopsis thaliana (Mouse-ear cress).